Consider the following 96-residue polypeptide: Protein FPV129 (96 aa).

2 helical membrane passes run 36 to 56 (IILDLVLNLIFDSLITSFVII) and 71 to 91 (LFLLMSYAIFRFIVMYLLYIV).

Belongs to the chordopoxvirinae L2 family.

It localises to the virion membrane. It is found in the host cytoplasm. In terms of biological role, early protein involved in early virion morphogenesis. Participates in the formation and elongation of crescent-shaped membrane precursors of immature virions in cytoplasmic factories. This Vertebrata (FPV) protein is Protein FPV129.